A 520-amino-acid chain; its full sequence is MSKFDTSALEAFVRHIPQNYKGPGGVVAVVKDGEVVLQHAWGFADLRTRTPMTLDTRMPICSVSKQFTCAVLLDAVGEPELLDDALEAYLDKFEDERPAVRDLCNNQSGLRDYWALSVLCGADPEGVFLPAQAQSLLRRLKTTHFEPGSHYSYCNGNFRILADLIEAHTGRTLVDILSERIFAPAGMKRAELISDTALFDECTGYEGDTVRGFLPATNRIQWMGDAGICASLNDMIAWEQFIDATRDDESGLYRRLSGPQTFKDGVAAPYGFGLNLHETGGKRLTGHGGALRGWRCQRWHCADERLSTIAMFNFEGGASEVAFKLMNIALGVSSSEVSRVEADSAWFGSWLDDETGLVLSLEDAGHGRMKARFGTSPEMMDVVSANEARSAVTTIRRDGETIELVRASENLRLSMKRVKGEAKHDIIGRYHSDELDADLLLVSEGGAIYGAFEGFLGKSDMYPLYSVGSDVWLLPVQRSMDAPSPGEWKLVFRRDDKGEITGLSVGCWLARGVEYRRVQP.

The active-site Nucleophile is the S62. Catalysis depends on K65, which acts as the Proton donor/acceptor. An important for specificity region spans residues 477–487 (QRSMDAPSPGE). D481 lines the substrate pocket.

It belongs to the peptidase S12 family. Homodimer.

The enzyme catalyses Release of an N-terminal D-amino acid from a peptide, Xaa-|-Yaa-, in which Xaa is preferably D-Ala, D-Ser or D-Thr. D-amino acid amides and methyl esters also are hydrolyzed, as is glycine amide.. Its activity is regulated as follows. Inhibited by beta-lactam compounds such as 6-aminopenicillic acid, 7-aminocephalosporanic acid, benzylpenicillin and ampicillin. Inhibited by p-chloromercuribenzoate. Hydrolyzes N-terminal residues in D-amino acid-containing peptides. The polypeptide is D-aminopeptidase (dap) (Brucella anthropi (Ochrobactrum anthropi)).